The sequence spans 307 residues: tRNA N6-adenosine threonylcarbamoyltransferase (307 aa).

Fe cation contacts are provided by His108 and His112. Substrate contacts are provided by residues 131–135 (IVSGG), Asp164, Gly177, Asp181, and Asn266. Residue Asp290 coordinates Fe cation.

Belongs to the KAE1 / TsaD family. Requires Fe(2+) as cofactor.

Its subcellular location is the cytoplasm. It carries out the reaction L-threonylcarbamoyladenylate + adenosine(37) in tRNA = N(6)-L-threonylcarbamoyladenosine(37) in tRNA + AMP + H(+). Required for the formation of a threonylcarbamoyl group on adenosine at position 37 (t(6)A37) in tRNAs that read codons beginning with adenine. Is involved in the transfer of the threonylcarbamoyl moiety of threonylcarbamoyl-AMP (TC-AMP) to the N6 group of A37, together with TsaE and TsaB. TsaD likely plays a direct catalytic role in this reaction. The sequence is that of tRNA N6-adenosine threonylcarbamoyltransferase from Mycoplasmopsis synoviae (strain 53) (Mycoplasma synoviae).